Here is a 455-residue protein sequence, read N- to C-terminus: Chromosomal replication initiator protein DnaA (455 aa).

The interval Met-1–Met-75 is domain I, interacts with DnaA modulators. The tract at residues Met-75–Thr-106 is domain II. The interval Ser-107 to Ala-321 is domain III, AAA+ region. ATP-binding residues include Gly-151, Gly-153, Lys-154, and Thr-155. The tract at residues Asn-322 to Glu-455 is domain IV, binds dsDNA.

It belongs to the DnaA family. As to quaternary structure, oligomerizes as a right-handed, spiral filament on DNA at oriC.

The protein localises to the cytoplasm. In terms of biological role, plays an essential role in the initiation and regulation of chromosomal replication. ATP-DnaA binds to the origin of replication (oriC) to initiate formation of the DNA replication initiation complex once per cell cycle. Binds the DnaA box (a 9 base pair repeat at the origin) and separates the double-stranded (ds)DNA. Forms a right-handed helical filament on oriC DNA; dsDNA binds to the exterior of the filament while single-stranded (ss)DNA is stabiized in the filament's interior. The ATP-DnaA-oriC complex binds and stabilizes one strand of the AT-rich DNA unwinding element (DUE), permitting loading of DNA polymerase. After initiation quickly degrades to an ADP-DnaA complex that is not apt for DNA replication. Binds acidic phospholipids. In Helicobacter pylori (strain G27), this protein is Chromosomal replication initiator protein DnaA.